The chain runs to 227 residues: Glial cell line-derived neurotrophic factor (227 aa).

The signal sequence occupies residues 1-19; that stretch reads MKLWAILAVCILLLSSVSS. Positions 20 to 93 are excised as a propeptide; the sequence is IPLPSNWLAG…EFIQDTIKRL (74 aa). 2 disordered regions span residues 32–61 and 93–113; these read RSHL…ANMA and LKRS…QSLA. Cystine bridges form between C134/C195, C161/C224, and C165/C226. 2 N-linked (GlcNAc...) asparagine glycosylation sites follow: N142 and N178.

This sequence belongs to the TGF-beta family. GDNF subfamily. In terms of assembly, homodimer; disulfide-linked. Interacts with GFRA1 coreceptor and RET: forms a 2:2:2 ternary complex composed of GDNF ligand, GFRA1 and RET receptor. In terms of tissue distribution, from stage 22, expressed in somites and the pronephros. At stage 24 and 26, expressed in the pharyngeal arches I-III. At stage 31, expression in the eye, central nervous system and pharyngeal arches IV and V increases. Up to stage 34, expression becomes intense at the oral cavity and lateral line structures. At this stage, expression weakens in the pharyngeal arches, and increases in the epibranchial arches. Expressed in the digestive tract in stage 34 embryos.

It is found in the secreted. Its function is as follows. Neurotrophic factor that enhances survival and morphological differentiation of dopaminergic neurons and increases their high-affinity dopamine uptake. Acts by binding to its coreceptor, GFRA1, leading to autophosphorylation and activation of the RET receptor. This Xenopus laevis (African clawed frog) protein is Glial cell line-derived neurotrophic factor.